A 504-amino-acid chain; its full sequence is UDP-N-acetylmuramoylalanine--D-glutamate ligase (504 aa).

Position 129-135 (129-135 (GTNGKTT)) interacts with ATP.

This sequence belongs to the MurCDEF family.

The protein resides in the cytoplasm. It carries out the reaction UDP-N-acetyl-alpha-D-muramoyl-L-alanine + D-glutamate + ATP = UDP-N-acetyl-alpha-D-muramoyl-L-alanyl-D-glutamate + ADP + phosphate + H(+). It participates in cell wall biogenesis; peptidoglycan biosynthesis. Functionally, cell wall formation. Catalyzes the addition of glutamate to the nucleotide precursor UDP-N-acetylmuramoyl-L-alanine (UMA). This is UDP-N-acetylmuramoylalanine--D-glutamate ligase from Burkholderia mallei (strain NCTC 10247).